Here is a 352-residue protein sequence, read N- to C-terminus: Phosphoribosylformylglycinamidine cyclo-ligase (352 aa).

Belongs to the AIR synthase family.

The protein resides in the cytoplasm. It catalyses the reaction 2-formamido-N(1)-(5-O-phospho-beta-D-ribosyl)acetamidine + ATP = 5-amino-1-(5-phospho-beta-D-ribosyl)imidazole + ADP + phosphate + H(+). The protein operates within purine metabolism; IMP biosynthesis via de novo pathway; 5-amino-1-(5-phospho-D-ribosyl)imidazole from N(2)-formyl-N(1)-(5-phospho-D-ribosyl)glycinamide: step 2/2. This Stenotrophomonas maltophilia (strain K279a) protein is Phosphoribosylformylglycinamidine cyclo-ligase.